The chain runs to 1878 residues: Breast cancer type 1 susceptibility protein homolog (1878 aa).

An N-acetylmethionine modification is found at methionine 1. The RING-type zinc-finger motif lies at 24–65; that stretch reads CPICLELIKEPVSTKCDHIFCKFCMLKLLNQRKGPSQCPLCK. A Glycyl lysine isopeptide (Lys-Gly) (interchain with G-Cter in SUMO2) cross-link involves residue lysine 109. Serine 114 bears the Phosphoserine mark. Lysine 298 participates in a covalent cross-link: Glycyl lysine isopeptide (Lys-Gly) (interchain with G-Cter in SUMO2). Over residues 303–318 the composition is skewed to polar residues; sequence NNSKQPGLARSQQSRW. A disordered region spans residues 303-329; the sequence is NNSKQPGLARSQQSRWAESKETCNDRQ. Residue lysine 336 forms a Glycyl lysine isopeptide (Lys-Gly) (interchain with G-Cter in SUMO2) linkage. The span at 349 to 365 shows a compositional bias: basic and acidic residues; the sequence is ELNKQKPPHSDSPRDSQ. Residues 349-368 are disordered; that stretch reads ELNKQKPPHSDSPRDSQDVP. Phosphoserine occurs at positions 392, 395, 420, and 431. Glycyl lysine isopeptide (Lys-Gly) (interchain with G-Cter in SUMO2) cross-links involve residues lysine 456, lysine 516, and lysine 581. Residues 548-614 form a disordered region; that stretch reads NNGPENETEG…KKNRLRRKSS (67 aa). Residues 559–582 show a composition bias toward basic and acidic residues; sequence YVQKEKNANPTESLEKESAFRTKT. Over residues 590–601 the composition is skewed to low complexity; the sequence is SNMELELNSSSS. Over residues 603–614 the composition is skewed to basic residues; it reads APKKNRLRRKSS. Serine 692, serine 712, and serine 751 each carry phosphoserine. The residue at position 987 (serine 987) is a Phosphoserine; by CHEK2. Position 1008 is a phosphoserine (serine 1008). Residue lysine 1079 forms a Glycyl lysine isopeptide (Lys-Gly) (interchain with G-Cter in SUMO2) linkage. Disordered stretches follow at residues 1134 to 1154 and 1183 to 1221; these read PEQPMGSSRSSQVCSETPDDL and QSGEFSRSPSPSDHTRLAQGYQRGTKKLESSEENMSSEE. 2 stretches are compositionally biased toward polar residues: residues 1138–1148 and 1183–1194; these read MGSSRSSQVCS and QSGEFSRSPSPS. Phosphoserine is present on residues serine 1144, serine 1190, serine 1192, serine 1212, serine 1218, serine 1219, and serine 1281. Polar residues predominate over residues 1315–1325; it reads DPFSMFDPTSK. Disordered regions lie at residues 1315-1401 and 1419-1504; these read DPFS…TQQR and EAVL…PSQS. Basic and acidic residues predominate over residues 1329–1343; sequence HQSENLDVLNDKELV. Residues serine 1331, serine 1344, and serine 1391 each carry the phosphoserine modification. Residues 1344 to 1369 show a composition bias toward acidic residues; that stretch reads SDDDDEREPGLEEDSPQEEQSVDSDL. Over residues 1377–1401 the composition is skewed to polar residues; it reads ESETSLSEDCSRLSSQSDILTTQQR. Threonine 1398 carries the phosphothreonine modification. The tract at residues 1401-1428 is interaction with PALB2; that stretch reads RDTMQDNLIKLQQEMAELEAVLEQHESQ. Phosphoserine occurs at positions 1427 and 1460. The span at 1465–1491 shows a compositional bias: polar residues; the sequence is DSPISQNPESLSTDKFQVFLDSSTSKN. A phosphoserine mark is found at serine 1527 and serine 1545. The segment at 1570–1590 is disordered; sequence GISLFSDDPESDPSSHRASEL. BRCT domains follow at residues 1652–1739 and 1764–1863; these read RISM…DFEV and QDRK…TYLI. Positions 1743 to 1764 are disordered; sequence VVNGRNHQGPKRARESQDRESQ. The segment covering 1754–1764 has biased composition (basic and acidic residues); it reads RARESQDRESQ.

As to quaternary structure, heterodimer with BARD1. Part of the BRCA1-associated genome surveillance complex (BASC), which contains BRCA1, MSH2, MSH6, MLH1, ATM, BLM, PMS2 and the MRE11-RAD50-NBN protein (MRN) complex. This association could be a dynamic process changing throughout the cell cycle and within subnuclear domains. Component of the BRCA1-A complex, at least composed of BRCA1, BARD1, UIMC1/RAP80, ABRAXAS1, BRCC3/BRCC36, BABAM2 and BABAM1/NBA1. Interacts (via the BRCT domains) with ABRAXAS1 (phosphorylated form); this is important for recruitment to sites of DNA damage. Can form a heterotetramer with two molecules of ABRAXAS1 (phosphorylated form). Component of the BRCA1-RBBP8 complex. Interacts (via the BRCT domains) with RBBP8 ('Ser-327' phosphorylated form); the interaction ubiquitinates RBBP8, regulates CHEK1 activation, and involves RBBP8 in BRCA1-dependent G2/M checkpoint control on DNA damage. Associates with RNA polymerase II holoenzyme. Interacts with SMC1A, NELFB, DCLRE1C, CLSPN. CHEK1, CHEK2, BAP1, BRCC3, UBXN1 and PCLAF. Interacts (via BRCT domains) with BRIP1 (phosphorylated form). Interacts with FANCD2 (ubiquitinated form). Interacts with H2AX (phosphorylated on 'Ser-140'). Interacts (via the BRCT domains) with ACACA (phosphorylated form); the interaction prevents dephosphorylation of ACACA. Part of a BRCA complex containing BRCA1, BRCA2 and PALB2. Interacts directly with PALB2; the interaction is essential for its function in HRR. Interacts directly with BRCA2; the interaction occurs only in the presence of PALB2 which serves as the bridging protein. Interacts (via the BRCT domains) with LMO4; the interaction represses the transcriptional activity of BRCA1. Interacts (via the BRCT domains) with CCAR2 (via N-terminus); the interaction represses the transcriptional activator activity of BRCA1. Interacts with EXD2. Interacts (via C-terminus) with DHX9; this interaction is direct and links BRCA1 to the RNA polymerase II holoenzyme. Interacts with DNA helicase ZGRF1; the interaction is increased following DNA damage induction. In terms of processing, phosphorylated in response to IR, UV, and various stimuli that cause checkpoint activation, probably by ATM or ATR. Phosphorylation at Ser-987 by CHEK2 regulates mitotic spindle assembly. Phosphorylation by AURKA regulates centrosomal microtubule nucleation. Autoubiquitinated, undergoes 'Lys-6'-linked polyubiquitination. 'Lys-6'-linked polyubiquitination does not promote degradation.

The protein resides in the nucleus. It is found in the chromosome. Its subcellular location is the cytoplasm. The enzyme catalyses S-ubiquitinyl-[E2 ubiquitin-conjugating enzyme]-L-cysteine + [acceptor protein]-L-lysine = [E2 ubiquitin-conjugating enzyme]-L-cysteine + N(6)-ubiquitinyl-[acceptor protein]-L-lysine.. Its pathway is protein modification; protein ubiquitination. In terms of biological role, E3 ubiquitin-protein ligase that specifically mediates the formation of 'Lys-6'-linked polyubiquitin chains and plays a central role in DNA repair by facilitating cellular responses to DNA damage. It is unclear whether it also mediates the formation of other types of polyubiquitin chains. The BRCA1-BARD1 heterodimer coordinates a diverse range of cellular pathways such as DNA damage repair, ubiquitination and transcriptional regulation to maintain genomic stability. Regulates centrosomal microtubule nucleation. Required for appropriate cell cycle arrests after ionizing irradiation in both the S-phase and the G2 phase of the cell cycle. Required for FANCD2 targeting to sites of DNA damage. Inhibits lipid synthesis by binding to inactive phosphorylated ACACA and preventing its dephosphorylation. Contributes to homologous recombination repair (HRR) via its direct interaction with PALB2, fine-tunes recombinational repair partly through its modulatory role in the PALB2-dependent loading of BRCA2-RAD51 repair machinery at DNA breaks. Component of the BRCA1-RBBP8 complex which regulates CHEK1 activation and controls cell cycle G2/M checkpoints on DNA damage via BRCA1-mediated ubiquitination of RBBP8. Acts as a transcriptional activator. In Canis lupus familiaris (Dog), this protein is Breast cancer type 1 susceptibility protein homolog (BRCA1).